Consider the following 343-residue polypeptide: Trans-enoyl reductase ACTTS2 (343 aa).

42-45 serves as a coordination point for NADP(+); it reads GDWK. Residue 128-135 coordinates substrate; sequence VGITTVGQ. Residues 162-165, 185-188, and Tyr-203 each bind NADP(+); these read STAT and SPHN. 268–272 serves as a coordination point for substrate; sequence GYTAL. Residue 333–334 coordinates NADP(+); it reads VS.

It belongs to the zinc-containing alcohol dehydrogenase family. In terms of assembly, monomer.

The protein operates within mycotoxin biosynthesis. Functionally, trans-enoyl reductase; part of the gene clusters that mediate the biosynthesis of the host-selective toxins (HSTs) ACT-toxins responsible for brown spot of tangerine disease by the tangerine pathotype which affects tangerines and mandarins. ACT-toxins consist of three moieties, 9,10-epoxy-8-hydroxy-9-methyl-decatrienoic acid (EDA), valine and a polyketide. ACT-toxin I is toxic to both citrus and pear; toxin II the 5''-deoxy derivative of ACT-toxin I, is highly toxic to pear and slightly toxic to citrus. On cellular level, ACT-toxins affect plasma membrane of susceptible cells and cause a sudden increase in loss of K(+) after a few minutes of toxin treatment. The acyl-CoA ligase ACTT1, the hydrolase ACTT2, the enoyl-CoA hydratases ACTT3 and ACTT6, and the acyl-CoA synthetase ACTT5 are all involved in the biosynthesis of the AK-, AF- and ACT-toxin common 9,10-epoxy-8-hydroxy-9-methyl-decatrienoic acid (EDA) structural moiety. The exact role of each enzyme, and of additional enzymes identified within the AF-toxin clusters have still to be determined. On the other hand, ACTTS1 to ACTTS4 are specific to the tangerine pathotype. The function of ACTTS3 is to elongate the polyketide chain portion of ACT-toxin that is unique to this toxin. The enoyl-reductase ACTTS2 might complement the missing enoyl-reductase (ER) domain in ACTTS3 in the synthesis of the polyketide portion of ACT-toxin. The roles of the nonribosomal peptide synthetases-related proteins ACTTS1 and ACTTS4 have also still not been elucidated. The polypeptide is Trans-enoyl reductase ACTTS2 (Alternaria alternata (Alternaria rot fungus)).